We begin with the raw amino-acid sequence, 779 residues long: LPS-assembly protein LptD (779 aa).

Residues 1 to 23 (MKIRYSVLSTFIISALYSQDTQA) form the signal peptide.

This sequence belongs to the LptD family. Component of the lipopolysaccharide transport and assembly complex. Interacts with LptE and LptA.

The protein localises to the cell outer membrane. Its function is as follows. Together with LptE, is involved in the assembly of lipopolysaccharide (LPS) at the surface of the outer membrane. The sequence is that of LPS-assembly protein LptD from Haemophilus ducreyi (strain 35000HP / ATCC 700724).